The chain runs to 500 residues: Glycerol kinase (500 aa).

Residue threonine 14 participates in ADP binding. ATP-binding residues include threonine 14, threonine 15, and serine 16. A sn-glycerol 3-phosphate-binding site is contributed by threonine 14. Arginine 18 is an ADP binding site. Sn-glycerol 3-phosphate is bound by residues arginine 84, glutamate 85, and tyrosine 136. Glycerol is bound by residues arginine 84, glutamate 85, and tyrosine 136. Phosphohistidine; by HPr is present on histidine 232. Aspartate 246 contacts sn-glycerol 3-phosphate. 2 residues coordinate glycerol: aspartate 246 and glutamine 247. Residues threonine 268 and glycine 311 each contribute to the ADP site. 4 residues coordinate ATP: threonine 268, glycine 311, glutamine 315, and glycine 412. ADP is bound by residues glycine 412 and asparagine 416.

This sequence belongs to the FGGY kinase family. Homotetramer and homodimer (in equilibrium). In terms of processing, the phosphoenolpyruvate-dependent sugar phosphotransferase system (PTS), including enzyme I, and histidine-containing protein (HPr) are required for the phosphorylation, which leads to the activation of the enzyme.

It catalyses the reaction glycerol + ATP = sn-glycerol 3-phosphate + ADP + H(+). Its pathway is polyol metabolism; glycerol degradation via glycerol kinase pathway; sn-glycerol 3-phosphate from glycerol: step 1/1. Activated by phosphorylation and inhibited by fructose 1,6-bisphosphate (FBP). In terms of biological role, key enzyme in the regulation of glycerol uptake and metabolism. Catalyzes the phosphorylation of glycerol to yield sn-glycerol 3-phosphate. This chain is Glycerol kinase, found in Limosilactobacillus reuteri (strain DSM 20016) (Lactobacillus reuteri).